The sequence spans 2192 residues: Non-reducing polyketide synthase 1 (2192 aa).

The interval 5–243 (LLLGDQTADQ…VSIPIYAPYH (239 aa)) is N-terminal acylcarrier protein transacylase domain (SAT). Positions 374–806 (NDKIAIVGMS…GGNTSLLLED (433 aa)) constitute a Ketosynthase family 3 (KS3) domain. Residues C546, H681, and H724 each act as for beta-ketoacyl synthase activity in the active site. Positions 905 to 1218 (FCFTGQGSQY…ANSMCALFLA (314 aa)) are malonyl-CoA:ACP transacylase (MAT) domain. The active-site For acyl/malonyl transferase activity is S993. The interval 1293–1610 (SCQKIIDEEF…RKVLNTFLPP (318 aa)) is product template (PT) domain. Residues 1295–1430 (QKIIDEEFSA…CTVKFEDINT (136 aa)) form an N-terminal hotdog fold region. The PKS/mFAS DH domain maps to 1295–1605 (QKIIDEEFSA…FQKIPRKVLN (311 aa)). The active-site Proton acceptor; for dehydratase activity is the H1327. Residues 1458-1605 (AHVIGRGLAY…FQKIPRKVLN (148 aa)) form a C-terminal hotdog fold region. The active-site Proton donor; for dehydratase activity is the D1518. Positions 1639–1668 (TQAQPAKAVPKQVTVAAPTPKAAPKKADLK) are disordered. The 78-residue stretch at 1670 to 1747 (PAGPTIITRV…EMKKFFSQYD (78 aa)) folds into the Carrier 1 domain. S1707 carries the O-(pantetheine 4'-phosphoryl)serine modification. Residues 1748 to 1788 (GEVGTPEQDDSDSDSETSGDASTPMSEVGTPMTIPSSAVSE) are disordered. The segment covering 1754-1764 (EQDDSDSDSET) has biased composition (acidic residues). One can recognise a Carrier 2 domain in the interval 1798-1875 (APASGEVSIA…DVENALDMRP (78 aa)). The residue at position 1835 (S1835) is an O-(pantetheine 4'-phosphoryl)serine. Positions 1913 to 2164 (SKYPAATSVL…SMMKPPHVSI (252 aa)) are thioesterase (TE) domain.

In terms of biological role, non-reducing polyketide synthase; part of the gene cluster that mediates the biosynthesis of elsinochromes, pigments consisting of at least four interconvertible tautomers (A, B, C and D) that have a core phenolic quinone to which various side chains are attached and which play an important role in fungal pathogenesis. The non-reducing polyketide synthase PKS1 was proposed to iteratively catalyze decarboxylation between acetyl-CoA and malonyl-CoA subunits for polyketide chain elongation. The released polyketide undergoes cyclization to form an aromatic ring, and proceeds via serial modification steps to produce the heptaketide back- bone of elsinochrome. As elsinochrome has a symmetrical structure, two identical heptaketides are fused to form a core 1,2-dihydrobenzo-perylene ring structure, which can then be successively modified to produce the various derivatives of elsinochrome. Some of these reactions may be cooperatively carried out, at least in part, by the products of RDT1, OXR1 and PKS1. PRF1, embedded within the elsinochrome cluster possibly functions to stabilize some of the biosynthetic enzymes required for elsinochrome production. As prefoldin is a hexamer containing 2 a and 4 b subunits, additional prefoldin subunits, whose coding genes may not immediately link to the elsinochrome biosynthetic gene cluster, are required to fulfill the chaperone function. In addition, no methyltransferase-coding gene exists within the biosynthetic gene cluster, even though elsinochrome has four methyl groups at positions C3, C7, C8 and C12. Apparently, the identified gene cluster does not contain the entire entourage of genes responsible for elsinochrome biosynthesis. Once elsinochrome is synthesized, it must be exported outside the fungal cells, which is probably accomplished by the ECT1 transporter, to avoid toxicity. The polypeptide is Non-reducing polyketide synthase 1 (Elsinoe fawcettii (Citrus scab fungus)).